Consider the following 253-residue polypeptide: Sulfur carrier protein FdhD (253 aa).

Catalysis depends on Cys100, which acts as the Cysteine persulfide intermediate.

It belongs to the FdhD family.

The protein localises to the cytoplasm. Functionally, required for formate dehydrogenase (FDH) activity. Acts as a sulfur carrier protein that transfers sulfur from IscS to the molybdenum cofactor prior to its insertion into FDH. This chain is Sulfur carrier protein FdhD, found in Sulfolobus acidocaldarius (strain ATCC 33909 / DSM 639 / JCM 8929 / NBRC 15157 / NCIMB 11770).